Consider the following 185-residue polypeptide: Ribosome-recycling factor (185 aa).

Belongs to the RRF family.

It is found in the cytoplasm. Responsible for the release of ribosomes from messenger RNA at the termination of protein biosynthesis. May increase the efficiency of translation by recycling ribosomes from one round of translation to another. The chain is Ribosome-recycling factor from Rhodospirillum centenum (strain ATCC 51521 / SW).